A 270-amino-acid chain; its full sequence is MPSSFDLLGEMIGLLQTEQLTSSWACPLPNALTKRQDLWRALINQRPALPLSKDYLNLEDAYLDDWRASFVPVSVKDCQKTNYTSLFLYHGDIRYLAVDAIVNAANSELLGCFIPNHGCIDNAIHTFAGSRLRLACQAIMTEQGRKEAIGQAKLTSAYHLPASYIIHTVGPRITKGHHVSPIRADLLARCYRSSLDLAVKAGLTSLAFCSISTGEFGFPKKEAAQIAIKTVLKWQAEHPESKTLTIIFNTFTSEDKALYDTYLQKENNCE.

The Macro domain maps to 73-267 (VSVKDCQKTN…LYDTYLQKEN (195 aa)). Positions 92, 93, and 106 each coordinate ADP-D-ribose. Zn(2+) is bound by residues Cys-112, His-117, and Cys-119. Residues Cys-119, Ile-120, Asp-121, Ser-212, Thr-213, Gly-214, Glu-215, and Phe-216 each contribute to the ADP-D-ribose site.

Belongs to the MacroD-type family. Zn-Macro subfamily. The cofactor is Zn(2+).

It carries out the reaction 4-O-(ADP-D-ribosyl)-L-aspartyl-[protein] + H2O = L-aspartyl-[protein] + ADP-D-ribose + H(+). Functionally, ADP-ribosylhydrolase that specifically reverses the SirTM-mediated mono-ADP-ribosylation at an asparatate residue of GcvH-L, by releasing ADP-ribose from the target protein. May play a role in the regulation of the response to host-induced oxidative stress. This Streptococcus pyogenes serotype M3 (strain ATCC BAA-595 / MGAS315) protein is Protein-ADP-ribose hydrolase.